The chain runs to 350 residues: DNA polymerase IV (350 aa).

The UmuC domain maps to 4 to 185; that stretch reads IIHIDMDCFY…LPLGKLPGIG (182 aa). Mg(2+)-binding residues include Asp-8 and Asp-103. The active site involves Glu-104.

The protein belongs to the DNA polymerase type-Y family. As to quaternary structure, monomer. It depends on Mg(2+) as a cofactor.

It localises to the cytoplasm. The catalysed reaction is DNA(n) + a 2'-deoxyribonucleoside 5'-triphosphate = DNA(n+1) + diphosphate. In terms of biological role, poorly processive, error-prone DNA polymerase involved in untargeted mutagenesis. Copies undamaged DNA at stalled replication forks, which arise in vivo from mismatched or misaligned primer ends. These misaligned primers can be extended by PolIV. Exhibits no 3'-5' exonuclease (proofreading) activity. May be involved in translesional synthesis, in conjunction with the beta clamp from PolIII. The sequence is that of DNA polymerase IV from Aeromonas hydrophila subsp. hydrophila (strain ATCC 7966 / DSM 30187 / BCRC 13018 / CCUG 14551 / JCM 1027 / KCTC 2358 / NCIMB 9240 / NCTC 8049).